A 374-amino-acid chain; its full sequence is Carboxypeptidase O (374 aa).

Residues 1 to 20 form the signal peptide; that stretch reads MKPLLETLYLLGMLVPGGLG. In terms of domain architecture, Peptidase M14 spans 49 to 344; the sequence is IYHPMGEIYE…EAVLSVLDDV (296 aa). His108 and Glu111 together coordinate Zn(2+). 3 N-linked (GlcNAc...) asparagine glycosylation sites follow: Asn132, Asn174, and Asn187. His236 contacts Zn(2+). The N-linked (GlcNAc...) asparagine glycan is linked to Asn251. Glu310 acts as the Proton donor/acceptor in catalysis. A lipid anchor (GPI-anchor amidated aspartate) is attached at Asp352. The propeptide at 353–374 is removed in mature form; that stretch reads SAGRVTSATMLLGLLVSCMSLL.

The protein belongs to the peptidase M14 family. Zn(2+) serves as cofactor. Post-translationally, N-glycosylated. Detected in enterocytes of the ileum.

The protein localises to the apical cell membrane. Its activity is regulated as follows. Strongly inhibited by potato carboxypeptidase inhibitor, and the chelating agents EDTA and 1,10-phenanthroline. Also inhibited by compounds with multiple carboxylic acid groups such as citrate and succinate, and to a lesser exent the amino acids aspartate and glutamate. Not significantly inhibited by benzylsuccinic acid. Carboxypeptidase which preferentially cleaves C-terminal acidic residues from peptides and proteins. Can also cleave C-terminal hydrophobic amino acids, with a preference for small residues over large residues. In Homo sapiens (Human), this protein is Carboxypeptidase O.